Consider the following 147-residue polypeptide: uncharacterized protein (147 aa).

The region spanning 50–140 (NQKKAIIVDT…WNSENLPTTF (91 aa)) is the Rhodanese domain.

This is an uncharacterized protein from Buchnera aphidicola subsp. Schizaphis graminum (strain Sg).